We begin with the raw amino-acid sequence, 215 residues long: FGFR1 oncogene partner 2 homolog (215 aa).

2 coiled-coil regions span residues 5–104 and 161–185; these read IEKA…MSKY and KEQE…ITRE. Positions 194 to 215 are disordered; sequence DASESTSLSALVTNSDLSLRKN. A compositionally biased stretch (polar residues) spans 197 to 215; that stretch reads ESTSLSALVTNSDLSLRKN.

It belongs to the SIKE family.

Its subcellular location is the cytoplasm. Functionally, may be involved in wound healing pathway. The chain is FGFR1 oncogene partner 2 homolog (FGFR1OP2) from Pongo abelii (Sumatran orangutan).